The following is a 602-amino-acid chain: Elongation factor 4 (602 aa).

One can recognise a tr-type G domain in the interval 7-188; the sequence is ENIRNFSIIA…AIIDLVPPPK (182 aa). Residues 19 to 24 and 135 to 138 contribute to the GTP site; these read DHGKST and NKID.

The protein belongs to the TRAFAC class translation factor GTPase superfamily. Classic translation factor GTPase family. LepA subfamily.

The protein localises to the cell inner membrane. It carries out the reaction GTP + H2O = GDP + phosphate + H(+). Required for accurate and efficient protein synthesis under certain stress conditions. May act as a fidelity factor of the translation reaction, by catalyzing a one-codon backward translocation of tRNAs on improperly translocated ribosomes. Back-translocation proceeds from a post-translocation (POST) complex to a pre-translocation (PRE) complex, thus giving elongation factor G a second chance to translocate the tRNAs correctly. Binds to ribosomes in a GTP-dependent manner. In Chlamydia pneumoniae (Chlamydophila pneumoniae), this protein is Elongation factor 4.